Here is a 1917-residue protein sequence, read N- to C-terminus: Diacylglycerol kinase eta (1917 aa).

Over residues 1-10 (MSHLKLDTLH) the composition is skewed to basic and acidic residues. Positions 1-37 (MSHLKLDTLHVQRSPRGSRRSSRSSGRSSACSSGSIS) are disordered. Residues 23-37 (RSSGRSSACSSGSIS) are compositionally biased toward low complexity. The PH domain occupies 82 to 175 (AIIKEGFLLK…WLGSLKTATA (94 aa)). 2 Phorbol-ester/DAG-type zinc fingers span residues 195-245 (HHHW…IANC) and 268-319 (PHQW…AVAC). Residues 350 to 486 (GNFSPLLVFV…DRWSIMVFEK (137 aa)) form the DAGKc domain. Disordered stretches follow at residues 1015–1053 (TTLC…PPRI), 1114–1149 (LEQQ…SEDE), and 1380–1399 (KDKD…EETN). The segment covering 1128–1145 (PEQQQTPTNKGPNSLATT) has biased composition (polar residues). The 64-residue stretch at 1854 to 1917 (WSVNEVVTWL…LQAIKDLSEN (64 aa)) folds into the SAM domain.

This sequence belongs to the eukaryotic diacylglycerol kinase family.

It localises to the cytoplasm. It catalyses the reaction a 1,2-diacyl-sn-glycerol + ATP = a 1,2-diacyl-sn-glycero-3-phosphate + ADP + H(+). In terms of biological role, phosphorylates diacylglycerol (DAG) to generate phosphatidic acid (PA). The polypeptide is Diacylglycerol kinase eta (Drosophila yakuba (Fruit fly)).